The sequence spans 112 residues: uncharacterized protein (112 aa).

This is an uncharacterized protein from Dictyostelium discoideum (Social amoeba).